Consider the following 785-residue polypeptide: Formin-like protein 3 (785 aa).

The signal sequence occupies residues 1–20 (MGRLRLAFLAISLVVFVCVS). The disordered stretch occupies residues 96-145 (YDWLAPASSPNEPPAETPDESSPSPSEETPSVVAPSQSVPGPPRPPPQRE). Residues 115–134 (ESSPSPSEETPSVVAPSQSV) show a composition bias toward low complexity. Residues 154–174 (LIIAVASTAVLTFVFVALMFL) traverse the membrane as a helical segment. Disordered stretches follow at residues 184–228 (AVGS…KKRS), 241–329 (EFST…APKT), and 730–785 (ETTK…SSPS). Residues 201-223 (STGSTENSPTVASTSRKMFSVAS) are compositionally biased toward polar residues. Pro residues predominate over residues 256 to 303 (LKLPPGRSAPPPPPAAAPPPQPPPPPPPKPQPPPPPKIARPPPAPPKG). Residues 321 to 747 (DSETGAPKTK…SGKKESEMTT (427 aa)) form the FH2 domain. Residues 745 to 754 (MTTSDSNQPS) show a composition bias toward polar residues. The segment covering 773-785 (SDDSDDEEDSSPS) has biased composition (acidic residues).

Belongs to the formin-like family. Class-I subfamily.

The protein localises to the membrane. Acts as actin nucleation factor that directs the formation of actin cables and polarized growth in pollen tubes. The chain is Formin-like protein 3 (FH3) from Arabidopsis thaliana (Mouse-ear cress).